The following is a 502-amino-acid chain: ATP synthase subunit alpha (502 aa).

169 to 176 (GDRQTGKT) lines the ATP pocket.

Belongs to the ATPase alpha/beta chains family. As to quaternary structure, F-type ATPases have 2 components, CF(1) - the catalytic core - and CF(0) - the membrane proton channel. CF(1) has five subunits: alpha(3), beta(3), gamma(1), delta(1), epsilon(1). CF(0) has three main subunits: a(1), b(2) and c(9-12). The alpha and beta chains form an alternating ring which encloses part of the gamma chain. CF(1) is attached to CF(0) by a central stalk formed by the gamma and epsilon chains, while a peripheral stalk is formed by the delta and b chains.

The protein resides in the cell inner membrane. It carries out the reaction ATP + H2O + 4 H(+)(in) = ADP + phosphate + 5 H(+)(out). Functionally, produces ATP from ADP in the presence of a proton gradient across the membrane. The alpha chain is a regulatory subunit. This is ATP synthase subunit alpha from Oleidesulfovibrio alaskensis (strain ATCC BAA-1058 / DSM 17464 / G20) (Desulfovibrio alaskensis).